The following is a 456-amino-acid chain: GTPase Der (456 aa).

2 EngA-type G domains span residues P4–D169 and V178–R353. Residues G10–S17, D57–L61, N120–E123, G184–S191, D231–I235, and N296–D299 each bind GTP. Residues R354–Q439 form the KH-like domain.

It belongs to the TRAFAC class TrmE-Era-EngA-EngB-Septin-like GTPase superfamily. EngA (Der) GTPase family. Associates with the 50S ribosomal subunit.

Its function is as follows. GTPase that plays an essential role in the late steps of ribosome biogenesis. This is GTPase Der from Prochlorococcus marinus (strain NATL1A).